The chain runs to 86 residues: Small ribosomal subunit protein bS16 (86 aa).

This sequence belongs to the bacterial ribosomal protein bS16 family.

This chain is Small ribosomal subunit protein bS16, found in Methylibium petroleiphilum (strain ATCC BAA-1232 / LMG 22953 / PM1).